A 113-amino-acid chain; its full sequence is U11-theraphotoxin-Hhn1a (113 aa).

Positions 1 to 21 are cleaved as a signal peptide; it reads MNTVRVTFLLVFVLAVSLGRA. Residues 22 to 74 constitute a propeptide that is removed on maturation; sequence DKDENRMEMQEKTEQGKSYLDFAENLLLQKLEELEAKLLEEDSEESRNSRQKR. Disulfide bonds link Cys75–Cys90, Cys82–Cys95, and Cys89–Cys110.

The protein belongs to the neurotoxin 14 (magi-1) family. 01 (HNTX-16) subfamily. In terms of tissue distribution, expressed by the venom gland.

It is found in the secreted. In terms of biological role, probable ion channel inhibitor. The protein is U11-theraphotoxin-Hhn1a of Cyriopagopus hainanus (Chinese bird spider).